A 290-amino-acid chain; its full sequence is MDIEAYFERIGYQNSRNKLDLQTLTEILQHQIRAIPFENLNIHCGESMELSLETIFDQIVRKKRGGWCLQVNHLLYWALTKMGFETTMLGGYVFNTPANKYSSGMIHLLVQVTISDRNYIVDAGFGRSLQMWEPLELVSGKDHPQVPAIFRLTEENETWYLDQIRREQYVPNQAFVNSDLLEKNKYRKIYSFTLEPRTIEDFESMNTYLQTSPASVFTSKSFCSLQTPEGVHCLVGCTLTYRRFSYKDNVDLVEFKSLKEEEIEDVLKTIFGISLEKKLVPKHGDRFFTI.

Cys68 functions as the Acyl-thioester intermediate in the catalytic mechanism. Residues Ser103 and Gly104 each contribute to the CoA site. 106–107 (IH) lines the substrate pocket. Active-site residues include His107 and Asp122. Tyr208 lines the CoA pocket.

Belongs to the arylamine N-acetyltransferase family.

It localises to the cytoplasm. It carries out the reaction an arylamine + acetyl-CoA = an N-acetylarylamine + CoA. The enzyme catalyses an N-hydroxyarylamine + acetyl-CoA = an N-acetoxyarylamine + CoA. Catalyzes the N- or O-acetylation of various arylamine and heterocyclic amine substrates, and participates in the detoxification of a plethora of hydrazine and arylamine drugs. The protein is Arylamine N-acetyltransferase 2 (NAT2) of Mesocricetus auratus (Golden hamster).